The sequence spans 338 residues: Large ribosomal subunit protein uL3 (338 aa).

The tract at residues 1 to 37 is disordered; the sequence is MPQPSRPRKGSMGFSPRKRAESEVPRIRSWASNDGAP.

This sequence belongs to the universal ribosomal protein uL3 family. Part of the 50S ribosomal subunit. Forms a cluster with proteins L14 and L24e.

One of the primary rRNA binding proteins, it binds directly near the 3'-end of the 23S rRNA, where it nucleates assembly of the 50S subunit. The polypeptide is Large ribosomal subunit protein uL3 (Haloquadratum walsbyi (strain DSM 16790 / HBSQ001)).